Here is a 434-residue protein sequence, read N- to C-terminus: Enolase (434 aa).

Q165 is a (2R)-2-phosphoglycerate binding site. The active-site Proton donor is E207. Mg(2+) contacts are provided by D244, E291, and D318. The (2R)-2-phosphoglycerate site is built by K343, R372, S373, and K394. Catalysis depends on K343, which acts as the Proton acceptor.

It belongs to the enolase family. Mg(2+) serves as cofactor.

Its subcellular location is the cytoplasm. The protein resides in the secreted. It is found in the cell surface. The catalysed reaction is (2R)-2-phosphoglycerate = phosphoenolpyruvate + H2O. Its pathway is carbohydrate degradation; glycolysis; pyruvate from D-glyceraldehyde 3-phosphate: step 4/5. Its function is as follows. Catalyzes the reversible conversion of 2-phosphoglycerate (2-PG) into phosphoenolpyruvate (PEP). It is essential for the degradation of carbohydrates via glycolysis. This chain is Enolase, found in Staphylococcus epidermidis (strain ATCC 35984 / DSM 28319 / BCRC 17069 / CCUG 31568 / BM 3577 / RP62A).